The primary structure comprises 202 residues: N-(5'-phosphoribosyl)anthranilate isomerase (202 aa).

This sequence belongs to the TrpF family.

It carries out the reaction N-(5-phospho-beta-D-ribosyl)anthranilate = 1-(2-carboxyphenylamino)-1-deoxy-D-ribulose 5-phosphate. The protein operates within amino-acid biosynthesis; L-tryptophan biosynthesis; L-tryptophan from chorismate: step 3/5. The protein is N-(5'-phosphoribosyl)anthranilate isomerase of Listeria monocytogenes serovar 1/2a (strain ATCC BAA-679 / EGD-e).